The primary structure comprises 433 residues: 3-phosphoshikimate 1-carboxyvinyltransferase (433 aa).

Residues Lys23, Ser24, and Arg28 each contribute to the 3-phosphoshikimate site. A phosphoenolpyruvate-binding site is contributed by Lys23. Gly95 and Arg123 together coordinate phosphoenolpyruvate. Positions 170, 171, 172, 198, 317, and 344 each coordinate 3-phosphoshikimate. Residue Gln172 coordinates phosphoenolpyruvate. Catalysis depends on Asp317, which acts as the Proton acceptor. Phosphoenolpyruvate contacts are provided by Arg348, Arg391, and Lys416.

The protein belongs to the EPSP synthase family. As to quaternary structure, monomer.

It is found in the cytoplasm. It catalyses the reaction 3-phosphoshikimate + phosphoenolpyruvate = 5-O-(1-carboxyvinyl)-3-phosphoshikimate + phosphate. It functions in the pathway metabolic intermediate biosynthesis; chorismate biosynthesis; chorismate from D-erythrose 4-phosphate and phosphoenolpyruvate: step 6/7. Functionally, catalyzes the transfer of the enolpyruvyl moiety of phosphoenolpyruvate (PEP) to the 5-hydroxyl of shikimate-3-phosphate (S3P) to produce enolpyruvyl shikimate-3-phosphate and inorganic phosphate. In Neisseria gonorrhoeae (strain NCCP11945), this protein is 3-phosphoshikimate 1-carboxyvinyltransferase.